The primary structure comprises 72 residues: Mitochondrial import receptor subunit TOM7-1 (72 aa).

The Cytoplasmic portion of the chain corresponds to 2–41 (LKPKGKNTKKAAAADEDDGAVAVVGKFVKEWGTWTAKKAK). Residues 42 to 59 (VITHYGFIPLVIIIGMNS) traverse the membrane as a helical segment. Residues 60–72 (EPKPSLSQLLSPV) lie on the Mitochondrial intermembrane side of the membrane.

The protein belongs to the Tom7 family. In terms of assembly, forms part of the preprotein translocase complex of the outer mitochondrial membrane (TOM complex).

It is found in the mitochondrion outer membrane. Functionally, seems to act as a modulator of the dynamics of the mitochondrial protein transport machinery. Seems to promote the dissociation of subunits of the outer membrane translocase. The protein is Mitochondrial import receptor subunit TOM7-1 (TOM7-1) of Solanum tuberosum (Potato).